Reading from the N-terminus, the 383-residue chain is tRNA pseudouridine synthase B (383 aa).

The Nucleophile role is filled by aspartate 53.

The protein belongs to the pseudouridine synthase TruB family. Type 1 subfamily.

The catalysed reaction is uridine(55) in tRNA = pseudouridine(55) in tRNA. Responsible for synthesis of pseudouridine from uracil-55 in the psi GC loop of transfer RNAs. The sequence is that of tRNA pseudouridine synthase B from Tropheryma whipplei (strain TW08/27) (Whipple's bacillus).